The following is a 261-amino-acid chain: Probable electron transfer flavoprotein subunit beta (261 aa).

An N-acetylserine modification is found at Ser-2.

Belongs to the ETF beta-subunit/FixA family. Heterodimer of an alpha and a beta subunit. Interacts with YFH1. The cofactor is FAD. It depends on AMP as a cofactor.

It localises to the mitochondrion matrix. Its function is as follows. The electron transfer flavoprotein serves as a specific electron acceptor for several dehydrogenases, including five acyl-CoA dehydrogenases, glutaryl-CoA and sarcosine dehydrogenase. It transfers the electrons to the main mitochondrial respiratory chain via ETF-ubiquinone oxidoreductase (ETF dehydrogenase). In Saccharomyces cerevisiae (strain ATCC 204508 / S288c) (Baker's yeast), this protein is Probable electron transfer flavoprotein subunit beta (CIR1).